A 136-amino-acid polypeptide reads, in one-letter code: Galectin-7 (136 aa).

Positions 6–136 (HKSSLPEGIR…DVQLDSVRIF (131 aa)) constitute a Galectin domain. 70-76 (WGREERG) provides a ligand contact to a beta-D-galactoside.

In terms of assembly, monomer. In terms of tissue distribution, mainly expressed in stratified squamous epithelium.

The protein resides in the cytoplasm. The protein localises to the nucleus. It is found in the secreted. Its function is as follows. Could be involved in cell-cell and/or cell-matrix interactions necessary for normal growth control. Pro-apoptotic protein that functions intracellularly upstream of JNK activation and cytochrome c release. This is Galectin-7 (LGALS7) from Homo sapiens (Human).